The chain runs to 211 residues: Calaxin (211 aa).

3 consecutive EF-hand domains span residues 64 to 99 (TDDM…FLRG), 100 to 135 (SLEE…SLLK), and 145 to 180 (GIKD…ETLL). Residues aspartate 77, aspartate 79, aspartate 81, cysteine 83, glutamate 88, aspartate 113, asparagine 115, aspartate 117, glutamate 124, aspartate 158, aspartate 160, aspartate 162, lysine 164, and aspartate 169 each coordinate Ca(2+).

Component of the outer dynein arm-docking complex along with ODAD1, ODAD2, ODAD3 and ODAD4. Strong expression in the respiratory epithelium. Expressed in the sperm.

Its subcellular location is the cytoplasm. It is found in the cytoskeleton. It localises to the cilium axoneme. The protein resides in the cell projection. The protein localises to the cilium. Its subcellular location is the flagellum. Component of the outer dynein arm-docking complex (ODA-DC) that mediates outer dynein arms (ODA) binding onto the doublet microtubule. Seems to regulate the assembly of both ODAs and their axonemal docking complex onto ciliary microtubules. Regulates ciliary and flagellar motility and is required for cilia-driven determination of body laterality. The protein is Calaxin of Homo sapiens (Human).